We begin with the raw amino-acid sequence, 310 residues long: Glycine--tRNA ligase alpha subunit (310 aa).

This sequence belongs to the class-II aminoacyl-tRNA synthetase family. Tetramer of two alpha and two beta subunits.

It is found in the cytoplasm. It carries out the reaction tRNA(Gly) + glycine + ATP = glycyl-tRNA(Gly) + AMP + diphosphate. This is Glycine--tRNA ligase alpha subunit from Aliivibrio salmonicida (strain LFI1238) (Vibrio salmonicida (strain LFI1238)).